Reading from the N-terminus, the 158-residue chain is Transcription elongation factor GreA (158 aa).

Residues 4-75 (EKTYPMTQEG…TQLENMIRNA (72 aa)) are a coiled coil.

It belongs to the GreA/GreB family.

In terms of biological role, necessary for efficient RNA polymerase transcription elongation past template-encoded arresting sites. The arresting sites in DNA have the property of trapping a certain fraction of elongating RNA polymerases that pass through, resulting in locked ternary complexes. Cleavage of the nascent transcript by cleavage factors such as GreA or GreB allows the resumption of elongation from the new 3'terminus. GreA releases sequences of 2 to 3 nucleotides. The protein is Transcription elongation factor GreA of Bacillus cereus (strain ATCC 10987 / NRS 248).